The chain runs to 168 residues: Dihydrofolate reductase (168 aa).

Residues 1-159 enclose the DHFR domain; it reads MISFIFAMDA…YDYEFLMYEK (159 aa). Residue 5-7 participates in substrate binding; sequence IFA. Residues 6–7 and 14–19 contribute to the NADP(+) site; these read FA and IGKDND. D27 lines the substrate pocket. 43–46 contributes to the NADP(+) binding site; that stretch reads GRKT. Residue R57 coordinates substrate. NADP(+) is bound by residues 62 to 65 and 95 to 100; these read VTSA and IGGAQL. T114 provides a ligand contact to substrate.

The protein belongs to the dihydrofolate reductase family.

The enzyme catalyses (6S)-5,6,7,8-tetrahydrofolate + NADP(+) = 7,8-dihydrofolate + NADPH + H(+). It functions in the pathway cofactor biosynthesis; tetrahydrofolate biosynthesis; 5,6,7,8-tetrahydrofolate from 7,8-dihydrofolate: step 1/1. Functionally, key enzyme in folate metabolism. Catalyzes an essential reaction for de novo glycine and purine synthesis, and for DNA precursor synthesis. The polypeptide is Dihydrofolate reductase (dfrA) (Bacillus subtilis (strain 168)).